Here is a 196-residue protein sequence, read N- to C-terminus: dTTP/UTP pyrophosphatase (196 aa).

Asp-78 serves as the catalytic Proton acceptor.

Belongs to the Maf family. YhdE subfamily. The cofactor is a divalent metal cation.

The protein resides in the cytoplasm. The catalysed reaction is dTTP + H2O = dTMP + diphosphate + H(+). The enzyme catalyses UTP + H2O = UMP + diphosphate + H(+). Nucleoside triphosphate pyrophosphatase that hydrolyzes dTTP and UTP. May have a dual role in cell division arrest and in preventing the incorporation of modified nucleotides into cellular nucleic acids. This is dTTP/UTP pyrophosphatase from Photobacterium profundum (strain SS9).